We begin with the raw amino-acid sequence, 1052 residues long: MRCLISYLFHSFLIFLKFIRSDVTALTLQEKRKKSRLTGILMKSMANKKNHQQKKSTDGSTMNGNNATATAAATTQNSSQIGQNSNSSHSVTNDNTSSNNASTSTSSITSTTTTTTTVPSSQQSQSQNQYSHQRLSSTSSTSQQTGISKFPAKKAGHNELEKTSNTANSQSGAFKGTTNKDRPKEKEKNTHSGNRQSQVNHNHHHSNHVSGNQQNRKNKNRDHSNQSYRGGYTHNHNNYHSLENAKSSGFLSNSSLSSAGQISASSAPPVSTTPTAIPIFQESKIVQTDPPVEEAKKKKEKPKIKRDEEPMPYKSTDPKNMDSVMAFKEHDEWDKVEFMCELVSFLSPTDLRLLGNCIEGSVRCYNNQMRPVEKTSNCSDPTAGLPQFVCSPPPPPQQVYYFPGIADAALYQTRNAVNSVFVQQHPPGLPPLLGGMQNIMYPPDANFHHSTSCTTPSSSVSVANKDVNNVPVVLSSSVNGISNNIPSDRQQLDSKPNTARGSSGNINQSNTTSPEPEPGSNHISTTAANPAHPTSVTVPQSVPPVPQEPELFLKSVLDLTSYIYTLMAVCSSTNRKSAAKISDYVQNVILREKSQILERIPDELDKITVLQEIGKIVAAMTHHPAITLDDKMKYAALRDGLRAQIETLFRQYYTTQKQLEQSNLVVPSSQAVGDENDTDSDHESEEEFEPLSGVMGSRFESNPVQPSPSVPGTFFIIRFIGRQIEKNDNLFSLEIHWSDGDRTFAQRSRDQLKALQHRLLDEFGQQRSEKYLHQGCTTSYSSFDDDNKKLSASTSTMETFAPNGERIVPRLARDATPAQYVQYINELSDLPARMMLSAVICEEFNGTRAKTEDLLQETREASDGLIYSRWKNPRAKSPVRYFKRNATGSIDPIELPVNMQPFLYSNIPQTQVQTLFPSCSNCGGPHAPKHCEKQTLLSKKGDHRTRSDGEGSQQNGGTSSSNSYAPIHANLPHAVYIENPQAMLGSNHFNHHQQQHIIQNTIFHNGGQFRANGTYEPQIPIAYYHAQGTVQNSNNTGGVNGNSGGGNQNSNF.

The first 25 residues, 1–25 (MRCLISYLFHSFLIFLKFIRSDVTA), serve as a signal peptide directing secretion. Disordered regions lie at residues 41–320 (LMKS…DPKN), 478–543 (VNGI…QSVP), 667–689 (PSSQ…EEFE), 933–965 (KQTL…NSYA), and 1033–1052 (SNNT…NSNF). A compositionally biased stretch (low complexity) spans 67-145 (ATATAAATTQ…SSTSSTSQQT (79 aa)). Polar residues predominate over residues 163-172 (TSNTANSQSG). Over residues 178-190 (TNKDRPKEKEKNT) the composition is skewed to basic and acidic residues. Low complexity predominate over residues 244–279 (NAKSSGFLSNSSLSSAGQISASSAPPVSTTPTAIPI). The segment covering 305 to 320 (KRDEEPMPYKSTDPKN) has biased composition (basic and acidic residues). The segment at 424–732 (QHPPGLPPLL…QIEKNDNLFS (309 aa)) is gld-4 binding. Polar residues predominate over residues 480 to 514 (GISNNIPSDRQQLDSKPNTARGSSGNINQSNTTSP). Positions 674-689 (DENDTDSDHESEEEFE) are enriched in acidic residues. The segment at 892-1052 (PIELPVNMQP…SGGGNQNSNF (161 aa)) is gld-3 binding. Positions 950-963 (EGSQQNGGTSSSNS) are enriched in low complexity. A compositionally biased stretch (gly residues) spans 1038–1052 (GVNGNSGGGNQNSNF).

In terms of assembly, isoform C interacts (via C-terminus) with gld-3 isoform A (via C-terminus) in an RNA-independent manner. Isoform C interacts with gld-4. Expressed in the germline (at protein level). In the early embryo is expressed in all cells, then becomes gradually restricted to the germ cell lineage and enriches in P granules (at protein level). In adult hermaphrodites, is expressed in the mitotic region, accumulates during early stages of meiotic prophase I and is slightly less abundant in maturing oocytes (at protein level).

The protein resides in the cytoplasm. It is found in the cytoplasmic granule. Required maternally for germline survival by forming a maternal complex with gld-3. During hermaphrodite development forms a complex with gld-3 which promotes the sperm/oocyte switch freeing the translational repressor fbf to turn off sperm promoting factors. Required for proper oocyte differentiation and oogenic meiotic arrest. Stimulates the enzymatic activity of gld-4 and together they prevent gld-1 mRNA degradation. In Caenorhabditis elegans, this protein is Germline survival defective-1.